Here is a 145-residue protein sequence, read N- to C-terminus: D-aminoacyl-tRNA deacylase (145 aa).

The short motif at 137–138 (GP) is the Gly-cisPro motif, important for rejection of L-amino acids element.

Belongs to the DTD family. As to quaternary structure, homodimer.

It localises to the cytoplasm. The catalysed reaction is glycyl-tRNA(Ala) + H2O = tRNA(Ala) + glycine + H(+). The enzyme catalyses a D-aminoacyl-tRNA + H2O = a tRNA + a D-alpha-amino acid + H(+). Its function is as follows. An aminoacyl-tRNA editing enzyme that deacylates mischarged D-aminoacyl-tRNAs. Also deacylates mischarged glycyl-tRNA(Ala), protecting cells against glycine mischarging by AlaRS. Acts via tRNA-based rather than protein-based catalysis; rejects L-amino acids rather than detecting D-amino acids in the active site. By recycling D-aminoacyl-tRNA to D-amino acids and free tRNA molecules, this enzyme counteracts the toxicity associated with the formation of D-aminoacyl-tRNA entities in vivo and helps enforce protein L-homochirality. The polypeptide is D-aminoacyl-tRNA deacylase (Rhodococcus opacus (strain B4)).